The primary structure comprises 153 residues: Aspartate carbamoyltransferase regulatory chain (153 aa).

The Zn(2+) site is built by C109, C114, C138, and C141.

Belongs to the PyrI family. As to quaternary structure, contains catalytic and regulatory chains. Requires Zn(2+) as cofactor.

In terms of biological role, involved in allosteric regulation of aspartate carbamoyltransferase. This is Aspartate carbamoyltransferase regulatory chain from Escherichia coli O7:K1 (strain IAI39 / ExPEC).